Consider the following 270-residue polypeptide: MTLLKDLLADPGLPRLEARMLAEHVLGRSRAWLLAHDTDPVEPAHEAAWRQLAARRLAGEPMAYLLGGREFMGHWYALTPDVLIPRPDTELLVETALHWLQGRAAPRVLDLGTGSGAIAVSVALGCPQAEVTATDLSAAALAVAEGNAQRLGARVRCLAGDWYEALPAQDRYDLIVSNPPYIAREDAHLAQGDLRFEPRGALTDENDGLAALARIAGGAPGRLLPGGAIWMEHGWDQAEAARALLRQAGLREVHSRRDLAGIERISGGYL.

S-adenosyl-L-methionine contacts are provided by residues 112-116 (GTGSG), D135, W162, and N178. 178–181 (NPPY) provides a ligand contact to substrate.

Belongs to the protein N5-glutamine methyltransferase family. PrmC subfamily.

The enzyme catalyses L-glutaminyl-[peptide chain release factor] + S-adenosyl-L-methionine = N(5)-methyl-L-glutaminyl-[peptide chain release factor] + S-adenosyl-L-homocysteine + H(+). In terms of biological role, methylates the class 1 translation termination release factors RF1/PrfA and RF2/PrfB on the glutamine residue of the universally conserved GGQ motif. The sequence is that of Release factor glutamine methyltransferase from Bordetella pertussis (strain Tohama I / ATCC BAA-589 / NCTC 13251).